The following is a 157-amino-acid chain: 2-C-methyl-D-erythritol 2,4-cyclodiphosphate synthase (157 aa).

Residues Asp8 and His10 each contribute to the a divalent metal cation site. Residues 8-10 and 34-35 contribute to the 4-CDP-2-C-methyl-D-erythritol 2-phosphate site; these read DVH and HS. His42 lines the a divalent metal cation pocket. Residues 56 to 58, 61 to 65, 100 to 106, 132 to 135, and Phe139 contribute to the 4-CDP-2-C-methyl-D-erythritol 2-phosphate site; these read DIG, FPDTD, AQKPKMA, and TTEE.

Belongs to the IspF family. Homotrimer. Requires a divalent metal cation as cofactor.

It catalyses the reaction 4-CDP-2-C-methyl-D-erythritol 2-phosphate = 2-C-methyl-D-erythritol 2,4-cyclic diphosphate + CMP. Its pathway is isoprenoid biosynthesis; isopentenyl diphosphate biosynthesis via DXP pathway; isopentenyl diphosphate from 1-deoxy-D-xylulose 5-phosphate: step 4/6. Involved in the biosynthesis of isopentenyl diphosphate (IPP) and dimethylallyl diphosphate (DMAPP), two major building blocks of isoprenoid compounds. Catalyzes the conversion of 4-diphosphocytidyl-2-C-methyl-D-erythritol 2-phosphate (CDP-ME2P) to 2-C-methyl-D-erythritol 2,4-cyclodiphosphate (ME-CPP) with a corresponding release of cytidine 5-monophosphate (CMP). In Clostridium novyi (strain NT), this protein is 2-C-methyl-D-erythritol 2,4-cyclodiphosphate synthase.